The sequence spans 98 residues: MEGKNKFNTYVVSFDYPSSYSSVFLRLRSLMYDMNFSSIVADEYGIPRQLNENSFAITTSLAASEIEDLIRLKCLDLPDIDFDLNIMTVDDYFRQFYK.

As to quaternary structure, monomer. In terms of processing, unlike other TA antitoxins, this protein is stable.

Antitoxin component of a type V toxin-antitoxin (TA) system. Neutralizes the toxic effects of toxin GhoT by digesting ghoT transcripts in a sequence-specific manner. In concert with GhoT is involved in reducing cell growth during antibacterial stress. This is Endoribonuclease antitoxin GhoS from Escherichia coli O157:H7.